Consider the following 180-residue polypeptide: Inosine/xanthosine triphosphatase (180 aa).

8-13 (TTNPAK) contacts substrate. Aspartate 38 and glutamate 68 together coordinate Mg(2+). 68–69 (EA) is a binding site for substrate.

The protein belongs to the YjjX NTPase family. As to quaternary structure, homodimer. Requires Mg(2+) as cofactor. The cofactor is Mn(2+).

It carries out the reaction XTP + H2O = XDP + phosphate + H(+). It catalyses the reaction ITP + H2O = IDP + phosphate + H(+). Phosphatase that hydrolyzes non-canonical purine nucleotides such as XTP and ITP to their respective diphosphate derivatives. Probably excludes non-canonical purines from DNA/RNA precursor pool, thus preventing their incorporation into DNA/RNA and avoiding chromosomal lesions. This is Inosine/xanthosine triphosphatase from Yersinia pseudotuberculosis serotype IB (strain PB1/+).